The sequence spans 487 residues: Serralysin (487 aa).

A propeptide spanning residues 1-16 is cleaved from the precursor; it reads MQSTKKAIEITESNFA. A Zn(2+)-binding site is contributed by H192. E193 is a catalytic residue. Residues H196, H202, and Y232 each contribute to the Zn(2+) site. The Ca(2+) site is built by R269, G271, T273, D301, G303, G304, D306, T343, E345, G350, G352, D354, N359, A361, N363, G367, G368, A369, D372, G376, G377, G378, G379, D381, G385, G386, A387, G388, D390, D399, D406, and D416. Hemolysin-type calcium-binding repeat units lie at residues 348 to 365 and 366 to 383; these read IGGS…NNVL and KGGA…ADEL.

It belongs to the peptidase M10B family. Ca(2+) is required as a cofactor. The cofactor is Zn(2+).

It is found in the secreted. It carries out the reaction Preferential cleavage of bonds with hydrophobic residues in P1'.. Naturally present in the silkworm intestine and allows the emerging moth to dissolve its cocoon. The sequence is that of Serralysin from Serratia marcescens (strain ATCC 21074 / E-15).